Reading from the N-terminus, the 1865-residue chain is MSQKSWIESTLTKRECVYIIPSSKDPHRCLPGCQICQQLVRCFCGRLVKQHACFTASLAMKYSDVKLGDHFNQAIEEWSVEKHTEQSPTDAYGVINFQGGSHSYRAKYVRLSYDTKPEVILQLLLKEWQMELPKLVISVHGGMQKFELHPRIKQLLGKGLIKAAVTTGAWILTGGVNTGVAKHVGDALKEHASRSSRKICTIGIAPWGVIENRNDLVGRDVVAPYQTLLNPLSKLNVLNNLHSHFILVDDGTVGKYGAEVRLRRELEKTINQQRIHARIGQGVPVVALIFEGGPNVILTVLEYLQESPPVPVVVCEGTGRAADLLAYIHKQTEEGGNLPDAAEPDIISTIKKTFNFGQNEALHLFQTLMECMKRKELITVFHIGSDEHQDIDVAILTALLKGTNASAFDQLILTLAWDRVDIAKNHVFVYGQQWLVGSLEQAMLDALVMDRVAFVKLLIENGVSMHKFLTIPRLEELYNTKQGPTNPMLFHLVRDVKQGNLPPGYKITLIDIGLVIEYLMGGTYRCTYTRKRFRLIYNSLGGNNRRSGRNTSSSTPQLRKSHESFGNRADKKEKMRHNHFIKTAQPYRPKIDTVMEEGKKKRTKDEIVDIDDPETKRFPYPLNELLIWACLMKRQVMARFLWQHGEESMAKALVACKIYRSMAYEAKQSDLVDDTSEELKQYSNDFGQLAVELLEQSFRQDETMAMKLLTYELKNWSNSTCLKLAVSSRLRPFVAHTCTQMLLSDMWMGRLNMRKNSWYKVILSILVPPAILLLEYKTKAEMSHIPQSQDAHQMTMDDSENNFQNITEEIPMEVFKEVRILDSNEGKNEMEIQMKSKKLPITRKFYAFYHAPIVKFWFNTLAYLGFLMLYTFVVLVQMEQLPSVQEWIVIAYIFTYAIEKVREIFMSEAGKVNQKIKVWFSDYFNISDTIAIISFFIGFGLRFGAKWNFANAYDNHVFVAGRLIYCLNIIFWYVRLLDFLAVNQQAGPYVMMIGKMVANMFYIVVIMALVLLSFGVPRKAILYPHEAPSWTLAKDIVFHPYWMIFGEVYAYEIDVCANDSVIPQICGPGTWLTPFLQAVYLFVQYIIMVNLLIAFFNNVYLQVKAISNIVWKYQRYHFIMAYHEKPVLPPPLIILSHIVSLFCCICKRRKKDKTSDGPKLFLTEEDQKKLHDFEEQCVEMYFNEKDDKFHSGSEERIRVTFERVEQMCIQIKEVGDRVNYIKRSLQSLDSQIGHLQDLSALTVDTLKTLTAQKASEASKVHNEITRELSISKHLAQNLIDDGPVRPSVWKKHGVVNTLSSSLPQGDLESNNPFHCNILMKDDKDPQCNIFGQDLPAVPQRKEFNFPEAGSSSGALFPSAVSPPELRQRLHGVELLKIFNKNQKLGSSSTSIPHLSSPPTKFFVSTPSQPSCKSHLETGTKDQETVCSKATEGDNTEFGAFVGHRDSMDLQRFKETSNKIKILSNNNTSENTLKRVSSLAGFTDCHRTSIPVHSKQAEKISRRPSTEDTHEVDSKAALIPDWLQDRPSNREMPSEEGTLNGLTSPFKPAMDTNYYYSAVERNNLMRLSQSIPFTPVPPRGEPVTVYRLEESSPNILNNSMSSWSQLGLCAKIEFLSKEEMGGGLRRAVKVQCTWSEHDILKSGHLYIIKSFLPEVVNTWSSIYKEDTVLHLCLREIQQQRAAQKLTFAFNQMKPKSIPYSPRFLEVFLLYCHSAGQWFAVEECMTGEFRKYNNNNGDEIIPTNTLEEIMLAFSHWTYEYTRGELLVLDLQGVGENLTDPSVIKAEEKRSCDMVFGPANLGEDAIKNFRAKHHCNSCCRKLKLPDLKRNDYTPDKIIFPQDEPSDLNLQPGNSTKESESTNSVRLML.

Met1 is modified (N-acetylmethionine). Residues 1-850 (MSQKSWIEST…ITRKFYAFYH (850 aa)) lie on the Cytoplasmic side of the membrane. The residue at position 101 (Ser101) is a Phosphoserine. Over residues 544–555 (NRRSGRNTSSST) the composition is skewed to low complexity. A disordered region spans residues 544 to 575 (NRRSGRNTSSSTPQLRKSHESFGNRADKKEKM). Positions 560 to 573 (KSHESFGNRADKKE) are enriched in basic and acidic residues. A helical transmembrane segment spans residues 851 to 876 (APIVKFWFNTLAYLGFLMLYTFVVLV). The Extracellular segment spans residues 877 to 882 (QMEQLP). The helical transmembrane segment at 883-904 (SVQEWIVIAYIFTYAIEKVREI) threads the bilayer. Over 905–923 (FMSEAGKVNQKIKVWFSDY) the chain is Cytoplasmic. The helical transmembrane segment at 924–943 (FNISDTIAIISFFIGFGLRF) threads the bilayer. Residues 944-956 (GAKWNFANAYDNH) are Extracellular-facing. Residues 957-980 (VFVAGRLIYCLNIIFWYVRLLDFL) traverse the membrane as a helical segment. The Cytoplasmic portion of the chain corresponds to 981–999 (AVNQQAGPYVMMIGKMVAN). A helical transmembrane segment spans residues 1000–1023 (MFYIVVIMALVLLSFGVPRKAILY). Residues 1024 to 1025 (PH) lie on the Extracellular side of the membrane. An intramembrane region (pore-forming) is located at residues 1026–1066 (EAPSWTLAKDIVFHPYWMIFGEVYAYEIDVCANDSVIPQIC). Topologically, residues 1067–1069 (GPG) are extracellular. Residues 1070 to 1098 (TWLTPFLQAVYLFVQYIIMVNLLIAFFNN) traverse the membrane as a helical segment. Residues 1099 to 1865 (VYLQVKAISN…ESTNSVRLML (767 aa)) lie on the Cytoplasmic side of the membrane. S-palmitoyl cysteine attachment occurs at residues Cys1143, Cys1144, and Cys1146. A Phosphothreonine; by autocatalysis modification is found at Thr1163. Ser1191 and Ser1193 each carry phosphoserine; by autocatalysis. Residues 1198 to 1250 (RVTFERVEQMCIQIKEVGDRVNYIKRSLQSLDSQIGHLQDLSALTVDTLKTLT) are a coiled coil. Ser1224 carries the phosphoserine modification. Residues Ser1255 and Ser1258 each carry the phosphoserine; by autocatalysis modification. Residue Thr1265 is modified to Phosphothreonine; by autocatalysis. Position 1287 is a phosphoserine; by autocatalysis (Ser1287). Residue Ser1301 is modified to Phosphoserine. Ser1358 bears the Phosphoserine; by autocatalysis mark. 2 positions are modified to phosphoserine: Ser1361 and Ser1386. Residues 1386-1398 (SSSTSIPHLSSPP) are compositionally biased toward low complexity. Residues 1386-1407 (SSSTSIPHLSSPPTKFFVSTPS) are disordered. Residues Ser1387 and Ser1390 each carry the phosphoserine; by autocatalysis modification. Residues Ser1395 and Ser1396 each carry the phosphoserine modification. At Ser1404 the chain carries Phosphoserine; by autocatalysis. Thr1405 bears the Phosphothreonine; by autocatalysis mark. Ser1407 carries the post-translational modification Phosphoserine; by autocatalysis. Thr1435 is subject to Phosphothreonine; by autocatalysis. At Ser1446 the chain carries Phosphoserine; by autocatalysis. Thr1455 is subject to Phosphothreonine; by autocatalysis. 2 positions are modified to phosphoserine; by autocatalysis: Ser1456 and Ser1463. Position 1467 is a phosphothreonine (Thr1467). Ser1468 bears the Phosphoserine; by autocatalysis mark. Thr1471 carries the phosphothreonine; by autocatalysis modification. A phosphoserine; by autocatalysis mark is found at Ser1476 and Ser1477. Residue Thr1482 is modified to Phosphothreonine; by autocatalysis. Residues 1492 to 1511 (HSKQAEKISRRPSTEDTHEV) form a disordered region. At Ser1493 the chain carries Phosphoserine; by autocatalysis. Positions 1494–1511 (KQAEKISRRPSTEDTHEV) are enriched in basic and acidic residues. Ser1500 carries the phosphoserine modification. Ser1504 bears the Phosphoserine; by autocatalysis mark. At Thr1508 the chain carries Phosphothreonine; by autocatalysis. Ser1513, Ser1527, and Ser1533 each carry phosphoserine; by autocatalysis. The segment at 1524–1543 (DRPSNREMPSEEGTLNGLTS) is disordered. A phosphothreonine; by autocatalysis mark is found at Thr1537 and Thr1542. At Ser1543 the chain carries Phosphoserine; by autocatalysis. A Phosphothreonine; by autocatalysis modification is found at Thr1551. 2 positions are modified to phosphoserine; by autocatalysis: Ser1567 and Ser1569. The residue at position 1583 (Thr1583) is a Phosphothreonine; by autocatalysis. An Alpha-type protein kinase domain is found at 1594–1824 (ILNNSMSSWS…CCRKLKLPDL (231 aa)). Residues Ser1598 and Ser1615 each carry the phosphoserine; by autocatalysis modification. ADP-binding residues include Gly1621, Gly1622, Leu1623, Arg1624, and Lys1648. Phosphoserine; by autocatalysis is present on Ser1660. A Phosphothreonine; by autocatalysis modification is found at Thr1685. 3 residues coordinate ADP: Glu1720, Glu1721, and Met1723. A Zn(2+)-binding site is contributed by His1753. Catalysis depends on Asp1767, which acts as the Proton acceptor. Position 1777 (Asp1777) interacts with ADP. Ser1779 is modified (phosphoserine; by autocatalysis). Zn(2+)-binding residues include His1810, Cys1812, and Cys1816. At Thr1830 the chain carries Phosphothreonine; by autocatalysis. Positions 1836 to 1865 (FPQDEPSDLNLQPGNSTKESESTNSVRLML) are disordered. Positions 1844–1865 (LNLQPGNSTKESESTNSVRLML) are enriched in polar residues. Ser1851 is modified (phosphoserine). Residue Ser1860 is modified to Phosphoserine; by autocatalysis.

It in the C-terminal section; belongs to the protein kinase superfamily. Alpha-type protein kinase family. ALPK subfamily. In the N-terminal section; belongs to the transient receptor (TC 1.A.4) family. LTrpC subfamily. TRPM7 sub-subfamily. In terms of assembly, homotetramer. Interacts with PLCB1. Forms heteromers with TRPM6; heteromeric channels are functionally different from the homomeric channels. Zn(2+) serves as cofactor. In terms of processing, palmitoylated; palmitoylation at Cys-1143, Cys-1144 and Cys-1146 promotes TRPM7 trafficking from the Golgi to the surface membrane. Post-translationally, autophosphorylated; autophosphorylation of C-terminus regulates TRPM7 kinase activity towards its substrates. The C-terminal kinase domain can be cleaved from the channel segment in a cell-type-specific fashion. TRPM7 is cleaved by caspase-8, dissociating the kinase from the ion-conducting pore. The cleaved kinase fragments (M7CKs) can translocate to the cell nucleus and binds chromatin-remodeling complex proteins in a Zn(2+)-dependent manner to ultimately phosphorylate specific Ser/Thr residues of histones.

It is found in the cell membrane. The protein localises to the cytoplasmic vesicle membrane. Its subcellular location is the nucleus. The catalysed reaction is L-seryl-[protein] + ATP = O-phospho-L-seryl-[protein] + ADP + H(+). It carries out the reaction L-threonyl-[protein] + ATP = O-phospho-L-threonyl-[protein] + ADP + H(+). The enzyme catalyses Mg(2+)(in) = Mg(2+)(out). It catalyses the reaction Ca(2+)(in) = Ca(2+)(out). The catalysed reaction is Zn(2+)(in) = Zn(2+)(out). Its activity is regulated as follows. Channel displays constitutive activity. Channel activity is negatively regulated by cytosolic Mg(2+) and Mg-ATP. Channel activity is negatively regulated by low intracellular pH. Resting free cytosolic Mg(2+) and Mg-ATP concentrations seem to be sufficient to block native TRPM7 channel activity. TRPM7 channel activity is highly dependent on membrane levels of phosphatidylinositol 4,5 bisphosphate (PIP2). PIP2 hydrolysis negatively regulates TRPM7 channel activity. TRPM7 kinase activity does not affect channel activity. The kinase activity is controlled through the autophosphorylation of a serine/threonine-rich region located N-terminal to the catalytic domain. In terms of biological role, bifunctional protein that combines an ion channel with an intrinsic kinase domain, enabling it to modulate cellular functions either by conducting ions through the pore or by phosphorylating downstream proteins via its kinase domain. The channel is highly permeable to divalent cations, specifically calcium (Ca2+), magnesium (Mg2+) and zinc (Zn2+) and mediates their influx. Controls a wide range of biological processes such as Ca2(+), Mg(2+) and Zn(2+) homeostasis, vesicular Zn(2+) release channel and intracellular Ca(2+) signaling, embryonic development, immune responses, cell motility, proliferation and differentiation. The C-terminal alpha-kinase domain autophosphorylates cytoplasmic residues of TRPM7. In vivo, TRPM7 phosphorylates SMAD2, suggesting that TRPM7 kinase may play a role in activating SMAD signaling pathways. In vitro, TRPM7 kinase phosphorylates ANXA1 (annexin A1), myosin II isoforms and a variety of proteins with diverse cellular functions. The cleaved channel exhibits substantially higher current and potentiates Fas receptor signaling. Functionally, the C-terminal kinase domain can be cleaved from the channel segment in a cell-type-specific fashion. In immune cells, the TRPM7 kinase domain is clipped from the channel domain by caspases in response to Fas-receptor stimulation. The cleaved kinase fragments can translocate to the nucleus, and bind chromatin-remodeling complex proteins in a Zn(2+)-dependent manner to ultimately phosphorylate specific Ser/Thr residues of histones known to be functionally important for cell differentiation and embryonic development. The sequence is that of Transient receptor potential cation channel subfamily M member 7 (TRPM7) from Homo sapiens (Human).